Consider the following 128-residue polypeptide: Fluoride-specific ion channel FluC (128 aa).

The next 4 membrane-spanning stretches (helical) occupy residues 4–24, 39–59, 71–91, and 99–119; these read LLLALIVGLGGFLGASLRYLI, GTLIANILGALLIGFIMEFSM, FLTTGIMGGLTTFSTFSYETI, and MTLGIENIILNLGCSLLFVVI. The Na(+) site is built by Gly78 and Thr81.

This sequence belongs to the fluoride channel Fluc/FEX (TC 1.A.43) family.

It is found in the cell membrane. It catalyses the reaction fluoride(in) = fluoride(out). With respect to regulation, na(+) is not transported, but it plays an essential structural role and its presence is essential for fluoride channel function. Fluoride-specific ion channel. Important for reducing fluoride concentration in the cell, thus reducing its toxicity. This Clostridium perfringens (strain 13 / Type A) protein is Fluoride-specific ion channel FluC.